Reading from the N-terminus, the 460-residue chain is Phosphoenolpyruvate carboxylase (460 aa).

Belongs to the PEPCase type 2 family. As to quaternary structure, homotetramer. It depends on Mg(2+) as a cofactor.

It catalyses the reaction oxaloacetate + phosphate = phosphoenolpyruvate + hydrogencarbonate. In terms of biological role, catalyzes the irreversible beta-carboxylation of phosphoenolpyruvate (PEP) to form oxaloacetate (OAA), a four-carbon dicarboxylic acid source for the tricarboxylic acid cycle. This chain is Phosphoenolpyruvate carboxylase, found in Pyrobaculum aerophilum (strain ATCC 51768 / DSM 7523 / JCM 9630 / CIP 104966 / NBRC 100827 / IM2).